The primary structure comprises 596 residues: Elongation factor 4 (596 aa).

Residues 2 to 184 (KNIRNFSIIA…TIVKNIPSPA (183 aa)) enclose the tr-type G domain. Residues 14–19 (DHGKST) and 131–134 (NKID) contribute to the GTP site.

The protein belongs to the TRAFAC class translation factor GTPase superfamily. Classic translation factor GTPase family. LepA subfamily.

It is found in the cell inner membrane. The enzyme catalyses GTP + H2O = GDP + phosphate + H(+). In terms of biological role, required for accurate and efficient protein synthesis under certain stress conditions. May act as a fidelity factor of the translation reaction, by catalyzing a one-codon backward translocation of tRNAs on improperly translocated ribosomes. Back-translocation proceeds from a post-translocation (POST) complex to a pre-translocation (PRE) complex, thus giving elongation factor G a second chance to translocate the tRNAs correctly. Binds to ribosomes in a GTP-dependent manner. The protein is Elongation factor 4 of Colwellia psychrerythraea (strain 34H / ATCC BAA-681) (Vibrio psychroerythus).